The following is a 234-amino-acid chain: Triosephosphate isomerase (234 aa).

Substrate is bound at residue 8–10 (NFK). The Electrophile role is filled by H90. The active-site Proton acceptor is the E159. Substrate contacts are provided by G165 and S197.

The protein belongs to the triosephosphate isomerase family. As to quaternary structure, homodimer.

The protein localises to the cytoplasm. It catalyses the reaction D-glyceraldehyde 3-phosphate = dihydroxyacetone phosphate. The protein operates within carbohydrate biosynthesis; gluconeogenesis. Its pathway is carbohydrate degradation; glycolysis; D-glyceraldehyde 3-phosphate from glycerone phosphate: step 1/1. Its function is as follows. Involved in the gluconeogenesis. Catalyzes stereospecifically the conversion of dihydroxyacetone phosphate (DHAP) to D-glyceraldehyde-3-phosphate (G3P). This chain is Triosephosphate isomerase, found in Helicobacter pylori (strain Shi470).